The primary structure comprises 233 residues: Pre-hexon-linking protein VIII (233 aa).

A Phosphothreonine; by host modification is found at threonine 64. Positions 112–163 (SRHVRFRGRSSPYSPGPIKRLIIRGRGIQLNDEVVSSLTGLRPDGVFQLGGA) are excised as a propeptide. Phosphoserine; by host is present on serine 180.

Belongs to the adenoviridae hexon-linking protein family. In terms of assembly, interacts with the peripentonal hexons as well as the hexons in the facets. Part of a complex composed of the core-capsid bridging protein, the endosome lysis protein VI and the hexon-linking protein VIII; these interactions bridge the virus core to the capsid. In terms of processing, cleaved by the viral protease during virion maturation. May cause the middle segment to be shed from the capsid.

The protein localises to the virion. Its subcellular location is the host nucleus. Functionally, structural component of the virion that acts as a cement protein on the capsid interior and which glue the peripentonal hexons and group-of-nine hexons together. This Homo sapiens (Human) protein is Pre-hexon-linking protein VIII.